Reading from the N-terminus, the 189-residue chain is GTPase NRas (189 aa).

Residue 10 to 17 coordinates GTP; it reads GAGGVGKS. The Effector region motif lies at 32–40; that stretch reads YDPTIEDSY. GTP contacts are provided by residues 57–61 and 116–119; these read DTAGQ and NKCD. Residues 166–185 form a hypervariable region region; the sequence is YRMKKLDSSEDNNQGCIRIP. Residue Cys181 is the site of S-palmitoyl cysteine attachment. The S-farnesyl cysteine moiety is linked to residue Cys186. Residues 187 to 189 constitute a propeptide, removed in mature form; it reads KLM.

Belongs to the small GTPase superfamily. Ras family. Palmitoylated by the ZDHHC9-GOLGA7 complex. Depalmitoylated by abhd17a, abhd17b and abhd17c. A continuous cycle of de- and re-palmitoylation regulates rapid exchange between plasma membrane and Golgi.

It localises to the cell membrane. It is found in the golgi apparatus membrane. The catalysed reaction is GTP + H2O = GDP + phosphate + H(+). Alternates between an inactive form bound to GDP and an active form bound to GTP. Activated by a guanine nucleotide-exchange factor (GEF) and inactivated by a GTPase-activating protein (GAP). In terms of biological role, ras proteins bind GDP/GTP and possess intrinsic GTPase activity. This Xenopus laevis (African clawed frog) protein is GTPase NRas (nras).